We begin with the raw amino-acid sequence, 272 residues long: 1,4-dihydroxy-2-naphthoyl-CoA synthase (272 aa).

Substrate is bound by residues Arg-33, 72 to 76 (SGGDQ), Tyr-84, 116 to 120 (YAIGG), Thr-142, Ser-148, Tyr-245, and Lys-260. A hydrogencarbonate-binding site is contributed by 141–143 (QTG).

The protein belongs to the enoyl-CoA hydratase/isomerase family. MenB subfamily. The cofactor is hydrogencarbonate.

The catalysed reaction is 2-succinylbenzoyl-CoA + H(+) = 1,4-dihydroxy-2-naphthoyl-CoA + H2O. Its pathway is quinol/quinone metabolism; 1,4-dihydroxy-2-naphthoate biosynthesis; 1,4-dihydroxy-2-naphthoate from chorismate: step 6/7. It functions in the pathway quinol/quinone metabolism; menaquinone biosynthesis. Converts o-succinylbenzoyl-CoA (OSB-CoA) to 1,4-dihydroxy-2-naphthoyl-CoA (DHNA-CoA). This Staphylococcus epidermidis (strain ATCC 35984 / DSM 28319 / BCRC 17069 / CCUG 31568 / BM 3577 / RP62A) protein is 1,4-dihydroxy-2-naphthoyl-CoA synthase.